The sequence spans 234 residues: Orotate phosphoribosyltransferase (234 aa).

Position 30 (K30) interacts with 5-phospho-alpha-D-ribose 1-diphosphate. Residue F38–F39 coordinates orotate. 5-phospho-alpha-D-ribose 1-diphosphate-binding positions include Y80–K81, R110, K111, K114, H116, and D136–A144. T140 and R168 together coordinate orotate.

Belongs to the purine/pyrimidine phosphoribosyltransferase family. PyrE subfamily. Homodimer.

It carries out the reaction orotidine 5'-phosphate + diphosphate = orotate + 5-phospho-alpha-D-ribose 1-diphosphate. Its pathway is pyrimidine metabolism; UMP biosynthesis via de novo pathway; UMP from orotate: step 1/2. Its function is as follows. Catalyzes the transfer of a ribosyl phosphate group from 5-phosphoribose 1-diphosphate to orotate, leading to the formation of orotidine monophosphate (OMP). The polypeptide is Orotate phosphoribosyltransferase (URA5) (Metarhizium anisopliae (Entomophthora anisopliae)).